Consider the following 156-residue polypeptide: Lipoprotein signal peptidase (156 aa).

Transmembrane regions (helical) follow at residues 8-28 (IYIN…KWIL), 39-59 (VFFI…SILS), 67-87 (YFLL…MIKF), and 99-119 (SLIL…GFVI). Catalysis depends on residues Asp-120 and Asp-138. A helical transmembrane segment spans residues 129-149 (WHFATFNIADFSIFIGMIMII).

The protein belongs to the peptidase A8 family.

It is found in the cell inner membrane. It carries out the reaction Release of signal peptides from bacterial membrane prolipoproteins. Hydrolyzes -Xaa-Yaa-Zaa-|-(S,diacylglyceryl)Cys-, in which Xaa is hydrophobic (preferably Leu), and Yaa (Ala or Ser) and Zaa (Gly or Ala) have small, neutral side chains.. The protein operates within protein modification; lipoprotein biosynthesis (signal peptide cleavage). In terms of biological role, this protein specifically catalyzes the removal of signal peptides from prolipoproteins. In Buchnera aphidicola subsp. Schizaphis graminum (strain Sg), this protein is Lipoprotein signal peptidase.